The sequence spans 96 residues: Cystatin (96 aa).

In terms of domain architecture, Cystatin spans 22-65; it reads DFIKAALNETGTHAGRKYKVLRSSQQVVAGMKYTFYIVFEDDES. N29 is a glycosylation site (N-linked (GlcNAc...) asparagine).

Belongs to the cystatin family. Interacts with cathepsin L-like peptidase; the interaction results in inhibition of cathepsin L-like peptidase activity. Salivary gland. Midgut.

Its function is as follows. Cysteine proteinase inhibitor. Inhibits cathepsin L-like peptidase. Increases cell viability following apoptosis induction by staurosporine. Inhibits human cathepsin S (CTSS), human cathepsin L2 (CTSV), human cathepsin L (CTSL), human cathepsin B (CTSB) and papain. (Microbial infection) Modulates dengue virus type 2 replication in salivary glands. The sequence is that of Cystatin from Aedes aegypti (Yellowfever mosquito).